The chain runs to 478 residues: Phosphatidylinositol 4-kinase type 2-alpha (478 aa).

Methionine 1 carries the N-acetylmethionine modification. Positions 1–57 (MDETSPLVSPERAQPPEYTFPSVSGAHFPQVPGGAVRVAAAGSGPSPPCSPGHDRER) are disordered. Phosphoserine occurs at positions 5, 9, 43, 46, and 50. The span at 31–44 (VPGGAVRVAAAGSG) shows a compositional bias: low complexity. Residues 123-452 (SIYPERIYQG…VQMPPVIVET (330 aa)) form the PI3K/PI4K catalytic domain. Residues 129–135 (IYQGSSG) are G-loop. Residues 130–136 (YQGSSGS) and lysine 151 contribute to the ATP site. The segment at 156 to 158 (EPY) is important for substrate binding. An important for interaction with membranes region spans residues 164 to 177 (KWTKWLQKLCCPCC). S-palmitoyl cysteine attachment occurs at residues cysteine 173, cysteine 174, cysteine 176, and cysteine 177. 260 to 263 (QLFV) lines the ATP pocket. The important for interaction with membranes stretch occupies residues 267 to 275 (KDADYWLRR). The interval 304–312 (RNTDRGNDN) is catalytic loop. Residues 343–363 (AIDNGLAFPLKHPDSWRAYPF) form an activation loop region. Aspartate 345 is a binding site for ATP. The segment at 358–367 (WRAYPFYWAW) is important for interaction with membranes. The residue at position 461 (serine 461) is a Phosphoserine.

This sequence belongs to the PI3/PI4-kinase family. Type II PI4K subfamily. Associates with the BLOC-1 and the AP-3 complexes; the BLOC-1 complex is required for optimal binding of PI4K2A to the AP-3 complex. Interacts with BLOC1S5 and DTNBP1. Interacts with FOS; this interaction may enhance phosphatidylinositol phosphorylation activity. Interacts with ITCH. Interacts with ATG9A. Post-translationally, ubiquitinated by ITCH; this does not lead to proteasomal degradation. In terms of processing, palmitoylated. Palmitoylated by ZDHHC3 and ZDHHC7 in the CCPCC motif. Palmitoylation is cholesterol-dependent, and required for TGN localization. As to expression, detected in adult brain, especially in neurons in the cerebellum, brain cortex, dorsal root ganglion and spinal cord (at protein level).

The protein localises to the golgi apparatus. Its subcellular location is the trans-Golgi network membrane. The protein resides in the membrane raft. It localises to the endosome. It is found in the endosome membrane. The protein localises to the cytoplasmic vesicle. Its subcellular location is the cell projection. The protein resides in the dendrite. It localises to the presynaptic cell membrane. It is found in the synapse. The protein localises to the synaptosome. Its subcellular location is the mitochondrion. The protein resides in the membrane. It localises to the cell membrane. It is found in the perikaryon. The protein localises to the neuron projection. The enzyme catalyses a 1,2-diacyl-sn-glycero-3-phospho-(1D-myo-inositol) + ATP = a 1,2-diacyl-sn-glycero-3-phospho-(1D-myo-inositol 4-phosphate) + ADP + H(+). In terms of biological role, membrane-bound phosphatidylinositol-4 kinase (PI4-kinase) that catalyzes the phosphorylation of phosphatidylinositol (PI) to phosphatidylinositol 4-phosphate (PI4P), a lipid that plays important roles in endocytosis, Golgi function, protein sorting and membrane trafficking and is required for prolonged survival of neurons. Besides, phosphorylation of phosphatidylinositol (PI) to phosphatidylinositol 4-phosphate (PI4P) is the first committed step in the generation of phosphatidylinositol 4,5-bisphosphate (PIP2), a precursor of the second messenger inositol 1,4,5-trisphosphate (InsP3). This is Phosphatidylinositol 4-kinase type 2-alpha (Pi4k2a) from Rattus norvegicus (Rat).